The primary structure comprises 344 residues: Dihydroorotate dehydrogenase (quinone) (344 aa).

FMN-binding positions include 65 to 69 (AGLDK) and T89. K69 serves as a coordination point for substrate. A substrate-binding site is contributed by 114-118 (NRMGF). FMN is bound by residues N142 and N175. N175 provides a ligand contact to substrate. S178 functions as the Nucleophile in the catalytic mechanism. Substrate is bound at residue N180. Residues K220 and T248 each coordinate FMN. Residue 249–250 (NT) coordinates substrate. Residues G271, G300, and 321-322 (YT) contribute to the FMN site.

It belongs to the dihydroorotate dehydrogenase family. Type 2 subfamily. In terms of assembly, monomer. The cofactor is FMN.

The protein localises to the cell membrane. The enzyme catalyses (S)-dihydroorotate + a quinone = orotate + a quinol. It participates in pyrimidine metabolism; UMP biosynthesis via de novo pathway; orotate from (S)-dihydroorotate (quinone route): step 1/1. Its function is as follows. Catalyzes the conversion of dihydroorotate to orotate with quinone as electron acceptor. This is Dihydroorotate dehydrogenase (quinone) from Paraburkholderia phymatum (strain DSM 17167 / CIP 108236 / LMG 21445 / STM815) (Burkholderia phymatum).